A 361-amino-acid polypeptide reads, in one-letter code: D-alanine--D-alanine ligase (361 aa).

One can recognise an ATP-grasp domain in the interval 149-353; it reads KKLMAAEGLP…YEELLDVLVQ (205 aa). ATP is bound at residue 176-231; it reads KKLLGLPVFVKPARGGSSIGISKVSRWEDLPAAVDLARQHDEKVIVESEIVGPEVE. Mg(2+)-binding residues include D308, E320, and N322.

This sequence belongs to the D-alanine--D-alanine ligase family. Requires Mg(2+) as cofactor. Mn(2+) is required as a cofactor.

The protein localises to the cytoplasm. It catalyses the reaction 2 D-alanine + ATP = D-alanyl-D-alanine + ADP + phosphate + H(+). Its pathway is cell wall biogenesis; peptidoglycan biosynthesis. Functionally, cell wall formation. The protein is D-alanine--D-alanine ligase of Corynebacterium efficiens (strain DSM 44549 / YS-314 / AJ 12310 / JCM 11189 / NBRC 100395).